Reading from the N-terminus, the 176-residue chain is Methylated-DNA--protein-cysteine methyltransferase (176 aa).

Cysteine 142 acts as the Nucleophile; methyl group acceptor in catalysis.

This sequence belongs to the MGMT family.

It localises to the cytoplasm. The enzyme catalyses a 6-O-methyl-2'-deoxyguanosine in DNA + L-cysteinyl-[protein] = S-methyl-L-cysteinyl-[protein] + a 2'-deoxyguanosine in DNA. It carries out the reaction a 4-O-methyl-thymidine in DNA + L-cysteinyl-[protein] = a thymidine in DNA + S-methyl-L-cysteinyl-[protein]. Its function is as follows. Involved in the cellular defense against the biological effects of O6-methylguanine (O6-MeG) and O4-methylthymine (O4-MeT) in DNA. Repairs the methylated nucleobase in DNA by stoichiometrically transferring the methyl group to a cysteine residue in the enzyme. This is a suicide reaction: the enzyme is irreversibly inactivated. This chain is Methylated-DNA--protein-cysteine methyltransferase, found in Methanothermobacter thermautotrophicus (strain ATCC 29096 / DSM 1053 / JCM 10044 / NBRC 100330 / Delta H) (Methanobacterium thermoautotrophicum).